A 518-amino-acid chain; its full sequence is Adenine deaminase (518 aa).

Belongs to the metallo-dependent hydrolases superfamily. Adenine deaminase family. Mn(2+) is required as a cofactor.

It catalyses the reaction adenine + H2O + H(+) = hypoxanthine + NH4(+). In Methanoculleus marisnigri (strain ATCC 35101 / DSM 1498 / JR1), this protein is Adenine deaminase.